The sequence spans 838 residues: Histidine biosynthesis trifunctional protein (838 aa).

The interval 1 to 271 (MIFPILPVIS…MVEPRTGYGF (271 aa)) is phosphoribosyl-AMP cyclohydrolase. The interval 272 to 360 (CHRETKFTCF…VYFAMVWCIK (89 aa)) is phosphoribosyl-ATP pyrophosphohydrolase. A histidinol dehydrogenase region spans residues 361–838 (HGVRLADIEK…IRMERMAETK (478 aa)). Gln-660 and His-663 together coordinate Zn(2+). Active-site residues include Glu-729 and His-730. Asp-764 and His-823 together coordinate Zn(2+).

In the C-terminal section; belongs to the histidinol dehydrogenase family. Requires Zn(2+) as cofactor.

The catalysed reaction is 1-(5-phospho-beta-D-ribosyl)-5'-AMP + H2O = 1-(5-phospho-beta-D-ribosyl)-5-[(5-phospho-beta-D-ribosylamino)methylideneamino]imidazole-4-carboxamide. The enzyme catalyses 1-(5-phospho-beta-D-ribosyl)-ATP + H2O = 1-(5-phospho-beta-D-ribosyl)-5'-AMP + diphosphate + H(+). It catalyses the reaction L-histidinol + 2 NAD(+) + H2O = L-histidine + 2 NADH + 3 H(+). Its pathway is amino-acid biosynthesis; L-histidine biosynthesis; L-histidine from 5-phospho-alpha-D-ribose 1-diphosphate: step 2/9. It participates in amino-acid biosynthesis; L-histidine biosynthesis; L-histidine from 5-phospho-alpha-D-ribose 1-diphosphate: step 3/9. It functions in the pathway amino-acid biosynthesis; L-histidine biosynthesis; L-histidine from 5-phospho-alpha-D-ribose 1-diphosphate: step 9/9. This chain is Histidine biosynthesis trifunctional protein (HIS4), found in Candida albicans (Yeast).